The following is a 281-amino-acid chain: Endochitinase At2g43610 (281 aa).

An N-terminal signal peptide occupies residues 1–28; sequence MATQNAILKKALIIFLFTLTIMTGTAFS. The 38-residue stretch at 29–66 folds into the Chitin-binding type-1 domain; the sequence is QNCGTNGCKGNMCCSRWGYCGTTKAYCGTGCQSGPCNS. 4 disulfide bridges follow: cysteine 31/cysteine 42, cysteine 36/cysteine 48, cysteine 41/cysteine 55, and cysteine 59/cysteine 64. The tract at residues 86–281 is catalytic; sequence GTIASVITPA…GVTPGTNLSC (196 aa). The active-site Proton donor is the glutamate 148. The N-linked (GlcNAc...) asparagine glycan is linked to asparagine 278.

Belongs to the glycosyl hydrolase 19 family. Chitinase class I subfamily.

The enzyme catalyses Random endo-hydrolysis of N-acetyl-beta-D-glucosaminide (1-&gt;4)-beta-linkages in chitin and chitodextrins.. This is Endochitinase At2g43610 from Arabidopsis thaliana (Mouse-ear cress).